A 231-amino-acid polypeptide reads, in one-letter code: Sugar fermentation stimulation protein homolog (231 aa).

Belongs to the SfsA family.

The polypeptide is Sugar fermentation stimulation protein homolog (Geotalea uraniireducens (strain Rf4) (Geobacter uraniireducens)).